The following is a 482-amino-acid chain: Histone deacetylase 1 (482 aa).

The interval 9-321 is histone deacetylase; that stretch reads RKVCYYYDGD…WTYETAVALD (313 aa). Glycine 27 and lysine 31 together coordinate 1D-myo-inositol 1,4,5,6-tetrakisphosphate. An N6-acetyllysine; alternate modification is found at lysine 74. Lysine 74 is covalently cross-linked (Glycyl lysine isopeptide (Lys-Gly) (interchain with G-Cter in SUMO2); alternate). Histidine 141 is an active-site residue. Aspartate 176 and histidine 178 together coordinate Zn(2+). The residue at position 220 (lysine 220) is an N6-acetyllysine. At cysteine 261 the chain carries S-nitrosocysteine. Aspartate 264 serves as a coordination point for Zn(2+). Arginine 270 is a binding site for 1D-myo-inositol 1,4,5,6-tetrakisphosphate. S-nitrosocysteine is present on cysteine 273. Acidic residues predominate over residues 390-400; sequence PEESGDEDEED. Positions 390–482 are disordered; sequence PEESGDEDEE…KGVKEEVKMA (93 aa). 5 positions are modified to phosphoserine: serine 393, serine 406, serine 409, serine 421, and serine 423. Residues 401-416 are compositionally biased toward basic and acidic residues; it reads PDKRISICSSDKRIAC. A compositionally biased stretch (acidic residues) spans 417 to 427; it reads EEEFSDSDEEG. At lysine 432 the chain carries N6-methylated lysine; by EHMT2. Residue lysine 438 forms a Glycyl lysine isopeptide (Lys-Gly) (interchain with G-Cter in SUMO2) linkage. Residues 443–482 show a composition bias toward basic and acidic residues; the sequence is VKTEDEKEKDPEEKKEVTEEEKTKEEKPEAKGVKEEVKMA. Residue lysine 444 forms a Glycyl lysine isopeptide (Lys-Gly) (interchain with G-Cter in SUMO2); alternate linkage. Lysine 444 participates in a covalent cross-link: Glycyl lysine isopeptide (Lys-Gly) (interchain with G-Cter in SUMO); alternate. Glycyl lysine isopeptide (Lys-Gly) (interchain with G-Cter in SUMO2) cross-links involve residues lysine 456, lysine 457, and lysine 473. Lysine 476 participates in a covalent cross-link: Glycyl lysine isopeptide (Lys-Gly) (interchain with G-Cter in SUMO2); alternate. Lysine 476 is covalently cross-linked (Glycyl lysine isopeptide (Lys-Gly) (interchain with G-Cter in SUMO); alternate). Residue lysine 480 forms a Glycyl lysine isopeptide (Lys-Gly) (interchain with G-Cter in SUMO2) linkage.

Belongs to the histone deacetylase family. HD type 1 subfamily. Part of the core histone deacetylase (HDAC) complex composed of HDAC1, HDAC2, RBBP4 and RBBP7, the core complex associates with SIN3, SAP18 and SAP30 to form the SIN3 HDAC complex. Component of the nucleosome remodeling and deacetylase (NuRD) repressor complex, composed of core proteins MTA1, MTA2, MTA3, RBBP4, RBBP7, HDAC1, HDAC2, MBD2, MBD3, and peripherally associated proteins CDK2AP1, CDK2AP2, GATAD2A, GATAD2B, CHD3, CHD4 and CHD5. The exact stoichiometry of the NuRD complex is unknown, and some subunits such as MBD2 and MBD3, GATAD2A and GATAD2B, and CHD3, CHD4 and CHD5 define mutually exclusive NuRD complexes. Component of a BHC histone deacetylase complex that contains HDAC1, HDAC2, HMG20B/BRAF35, KDM1A, RCOR1/CoREST and PHF21A/BHC80. The BHC complex may also contain ZMYM2, ZNF217, ZMYM3, GSE1 and GTF2I. Component of a mSin3A corepressor complex that contains SIN3A, SAP130, SUDS3/SAP45, ARID4B/SAP180, HDAC1 and HDAC2. Found in a trimeric complex with APBB1 and TSHZ3; the interaction between HDAC1 and APBB1 is mediated by TSHZ3. Forms a complex comprising APPL1, RUVBL2, APPL2, CTNNB1 and HDAC2. Component of a RCOR/GFI/KDM1A/HDAC complex. Part of a complex composed of TRIM28, HDAC1, HDAC2 and EHMT2. Part of a complex containing at least CDYL, MIER1, MIER2, HDAC1 and HDAC2. The large PER complex involved in the histone deacetylation is composed of at least HDAC1, PER2, SFPQ and SIN3A. Associates with the 9-1-1 complex; interacts with HUS1. Found in a complex with DNMT3A and HDAC7. Found in a complex with YY1, SIN3A and GON4L. Identified in a histone deacetylase complex that contains DNTTIP1, HDAC1 and MIDEAS; this complex assembles into a tetramer that contains four copies of each protein chain. Found in a complex composed of at least SINHCAF, SIN3A, HDAC1, SAP30, RBBP4, OGT and TET1. Component of the SIN3B complex, which includes SIN3B, HDAC1, PHF12 and MORF4L1. Interacts with GFI1; the interaction is direct. Interacts directly with GFI1B. Interacts with TSHZ3 (via N-terminus); the interaction is direct. Interacts with APEX1; the interaction is not dependent on the acetylated status of APEX1. Interacts with BANP. Interacts with BAZ2A/TIP5. Interacts with BCL6. Interacts with BCOR. Interacts with BHLHE40/DEC1. Interacts with BRCC3; this interaction is enhanced in the presence of PWWP2B. Interacts with BRMS1. Interacts with BRMS1L. Interacts with C10orf90/FATS (via its N-terminal); the interaction prevents binding of HDAC1 to CDKN1A/p21 and facilitates the acetylation and stabilization of CDKN1A/p21. Interacts with CBFA2T3. Interacts with CCAR2. Interacts with CDK2AP1. Interacts with CHD3. Interacts with CHD4. Interacts with CHFR. Interacts with CIART. Interacts with CDKN1A/p21. Interacts with CDK5 complexed to CDK5R1 (p25). Interacts with CRY1. Interacts with DAXX. Interacts with DDIT3/CHOP. Interacts with DDX5. Interacts with DHX36; this interaction occurs in a RNA-dependent manner. Interacts with DNMT1. Interacts with DNTTIP1. Interacts with E4F1. Interacts with EP300. Interacts with ERCC6. Interacts with GATAD2A. Interacts with HCFC1. Interacts with HDAC9. Interacts with HUS1. Interacts with INSM1. Interacts with KDM4A. Interacts with KDM5A; this interaction impairs histone deacetylation. Interacts with KDM5B. Interacts with KLF1. Interacts with MBD3L2. Interacts with MIER1. Interacts with NFE4. Interacts with NR4A2/NURR1. Interacts with NR1D2 (via C-terminus). Interacts with NRIP1. Interacts with NSD2. Interacts with PACS2. Interacts with PHB2. Interacts with PPHLN1. Interacts with PRDM6. Interacts with PRDM16. Interacts with PWWP2A in a MTA1-dependent manner. Interacts with PWWP2B. Interacts with RB1. Interacts with RERE. Interacts with SANBR (via the BTB domain). Interacts with SAMSN1. Interacts with SAP30L. Interacts with SETDB1. Interacts with SIN3A. Interacts with SMAD3. Interacts with SMAD4; positively regulated by ZBTB7A. Interacts with SMARCAD1. Interacts with SMARCA4/BRG1. Interacts with SMYD2. Interacts with SMYD4 (via MYND-type zinc finger). Interacts with SP1; the interaction deacetylates SP1 and regulates its transcriptional activity. Interacts with SP3; the interaction deacetylates SP3 and regulates its transcriptional activity. In vitro, C(18) ceramides increase this interaction and the subsequent SP3 deacetylation and SP3-mediated repression of the TERT promoter. Interacts with SPEN/MINT. Interacts with SPHK2. Interacts with SUV39H1. Interacts with TGIF. Interacts with TGIF2. Interacts with TRAF6. Interacts with TRIM28; the interaction recruits HDAC1 to E2F1 and inhibits its acetylation. Interacts with TSC22D3 isoform 1; this interaction affects HDAC1 activity on MYOG promoter and thus inhibits MYOD1 transcriptional activity. Interacts with UHRF1. Interacts with UHRF2. Interacts with ZBTB7A. Interacts with ZMYND8. Interacts with ZMYND15. Interacts with ZNF431. Interacts with ZNF516; this interaction is enhanced in the presence of PWWP2B. Interacts with ZNF541. Interacts with ZNF638. Interacts with ZNHIT1. Interacts with the non-histone region of MACROH2A1. Identified in a complex with HDAC2, KCTD19, DNTTIP1 and ZNF541. Interacts with MSX3. Interacts with VRK1. Zn(2+) serves as cofactor. Sumoylated on Lys-444 and Lys-476; which promotes enzymatic activity. Desumoylated by SENP1. In terms of processing, phosphorylation on Ser-421 and Ser-423 promotes enzymatic activity and interactions with NuRD and SIN3 complexes. Phosphorylated by CDK5. Post-translationally, ubiquitinated by CHFR and KCTD11, leading to its degradation by the proteasome.

It is found in the nucleus. It carries out the reaction N(6)-acetyl-L-lysyl-[histone] + H2O = L-lysyl-[histone] + acetate. The enzyme catalyses N(6)-acetyl-L-lysyl-[protein] + H2O = L-lysyl-[protein] + acetate. The catalysed reaction is N(6)-(2E)-butenoyl-L-lysyl-[protein] + H2O = (2E)-2-butenoate + L-lysyl-[protein]. It catalyses the reaction N(6)-[(S)-lactoyl]-L-lysyl-[protein] + H2O = (S)-lactate + L-lysyl-[protein]. Its activity is regulated as follows. Inositol tetraphosphate (1D-myo-inositol 1,4,5,6-tetrakisphosphate) may act as an intermolecular glue between HDAC1 and N-Cor repressor complex components. Histone deacetylase that catalyzes the deacetylation of lysine residues on the N-terminal part of the core histones (H2A, H2B, H3 and H4). Histone deacetylation gives a tag for epigenetic repression and plays an important role in transcriptional regulation, cell cycle progression and developmental events. Histone deacetylases act via the formation of large multiprotein complexes. Acts as a component of the histone deacetylase NuRD complex which participates in the remodeling of chromatin. As part of the SIN3B complex is recruited downstream of the constitutively active genes transcriptional start sites through interaction with histones and mitigates histone acetylation and RNA polymerase II progression within transcribed regions contributing to the regulation of transcription. Also functions as a deacetylase for non-histone targets, such as NR1D2, RELA, SP1, SP3, STAT3 and TSHZ3. Deacetylates SP proteins, SP1 and SP3, and regulates their function. Component of the BRG1-RB1-HDAC1 complex, which negatively regulates the CREST-mediated transcription in resting neurons. Upon calcium stimulation, HDAC1 is released from the complex and CREBBP is recruited, which facilitates transcriptional activation. Deacetylates TSHZ3 and regulates its transcriptional repressor activity. Deacetylates 'Lys-310' in RELA and thereby inhibits the transcriptional activity of NF-kappa-B. Deacetylates NR1D2 and abrogates the effect of KAT5-mediated relieving of NR1D2 transcription repression activity. Component of a RCOR/GFI/KDM1A/HDAC complex that suppresses, via histone deacetylase (HDAC) recruitment, a number of genes implicated in multilineage blood cell development. Involved in CIART-mediated transcriptional repression of the circadian transcriptional activator: CLOCK-BMAL1 heterodimer. Required for the transcriptional repression of circadian target genes, such as PER1, mediated by the large PER complex or CRY1 through histone deacetylation. In addition to protein deacetylase activity, also has protein-lysine deacylase activity: acts as a protein decrotonylase and delactylase by mediating decrotonylation ((2E)-butenoyl) and delactylation (lactoyl) of histones, respectively. This is Histone deacetylase 1 (Hdac1) from Rattus norvegicus (Rat).